A 357-amino-acid chain; its full sequence is Prostaglandin D2 receptor (357 aa).

Residues 1–20 (MNESYRCQTSTWVERGSSAT) are Extracellular-facing. The N-linked (GlcNAc...) asparagine glycan is linked to Asn-2. The chain crosses the membrane as a helical span at residues 21–41 (MGAVLFGAGLLGNLLALVLLA). Topologically, residues 42–58 (RSGLGSCRPGPLHPPPS) are cytoplasmic. The helical transmembrane segment at 59-79 (VFYVLVCGLTVTDLLGKCLIS) threads the bilayer. Topologically, residues 80–106 (PMVLAAYAQNQSLKELLPASGNQLCET) are extracellular. Asn-89 carries an N-linked (GlcNAc...) asparagine glycan. A disulfide bridge connects residues Cys-104 and Cys-182. A helical membrane pass occupies residues 107–127 (FAFLMSFFGLASTLQLLAMAV). Over 128–149 (ECWLSLGHPFFYQRHVTLRRGV) the chain is Cytoplasmic. The helical transmembrane segment at 150 to 170 (LVAPVVAAFCLAFCALPFAGF) threads the bilayer. The Extracellular portion of the chain corresponds to 171 to 194 (GKFVQYCPGTWCFIQMIHKERSFS). The chain crosses the membrane as a helical span at residues 195–215 (VIGFSVLYSSLMALLVLATVV). At 216–261 (CNLGAMYNLYDMHRRQRHYPHRCSRDRAQSGSDYRHGSLHPLEELD) the chain is on the cytoplasmic side. Residues 262–282 (HFVLLALMTVLFTMCSLPLIY) traverse the membrane as a helical segment. Over 283-306 (RAYYGAFKLENKAEGDSEDLQALR) the chain is Extracellular. Residues 307 to 327 (FLSVISIVDPWIFIIFRTSVF) traverse the membrane as a helical segment. Residues 328 to 357 (RMLFHKVFTRPLIYRNWSSHSQQSNVESTL) are Cytoplasmic-facing.

It belongs to the G-protein coupled receptor 1 family. In terms of tissue distribution, most abundantly expressed in the ileum, followed by lung, stomach and uterus.

The protein localises to the cell membrane. In terms of biological role, receptor for prostaglandin D2 (PGD2). The activity of this receptor is mainly mediated by G(s) proteins that stimulate adenylate cyclase, resulting in an elevation of intracellular cAMP. A mobilization of calcium is also observed, but without formation of inositol 1,4,5-trisphosphate. Involved in PLA2G3-dependent maturation of mast cells. PLA2G3 is secreted by immature mast cells and acts on nearby fibroblasts upstream to PTDGS to synthesize PGD2, which in turn promotes mast cell maturation and degranulation via PTGDR. The polypeptide is Prostaglandin D2 receptor (Ptgdr) (Mus musculus (Mouse)).